The following is a 143-amino-acid chain: Transcriptional regulator MraZ (143 aa).

2 consecutive SpoVT-AbrB domains span residues 5-47 and 76-119; these read EYEH…TLEE and AIEV…DRET.

This sequence belongs to the MraZ family. As to quaternary structure, forms oligomers.

It localises to the cytoplasm. It is found in the nucleoid. In Staphylococcus haemolyticus (strain JCSC1435), this protein is Transcriptional regulator MraZ.